The following is a 146-amino-acid chain: Dihydroneopterin aldolase 1 (146 aa).

Residues Glu-41, Tyr-73, and 92–93 (LE) contribute to the substrate site. The active-site Proton donor/acceptor is Lys-119.

This sequence belongs to the DHNA family. Homooctamer. Forms a hollow cylinder assembled from two ring-shaped tetramers. Expressed in roots, leaves, stems and siliques.

It catalyses the reaction 7,8-dihydroneopterin = 6-hydroxymethyl-7,8-dihydropterin + glycolaldehyde. Its pathway is cofactor biosynthesis; tetrahydrofolate biosynthesis; 2-amino-4-hydroxy-6-hydroxymethyl-7,8-dihydropteridine diphosphate from 7,8-dihydroneopterin triphosphate: step 3/4. In terms of biological role, catalyzes the conversion of 7,8-dihydroneopterin into 6-hydroxymethyl-7,8-dihydropterin, a biosynthetic precursor of the vitamin tetrahydrofolate. Can use L-threo-dihydroneopterin and D-erythro-dihydroneopterin as substrates for the formation of 6-hydroxymethyldihydropterin, but it can also catalyze the epimerization of carbon 2' of dihydroneopterin and dihydromonapterin. This Arabidopsis thaliana (Mouse-ear cress) protein is Dihydroneopterin aldolase 1.